The sequence spans 107 residues: LDQRRRTFSFTGNSYFFIPSIHPSSLLSFLVSCCWPIGQERVARPASLRPRWHKPSTVLKVLNPRTVVILDHLGNNRTVSIDNLKPTSHQNGTTNDTATMDHLEKNE.

The span at 80-98 (SIDNLKPTSHQNGTTNDTA) shows a compositional bias: polar residues. The segment at 80-107 (SIDNLKPTSHQNGTTNDTATMDHLEKNE) is disordered.

This is an uncharacterized protein from Human spumaretrovirus (SFVcpz(hu)).